A 155-amino-acid polypeptide reads, in one-letter code: SsrA-binding protein (155 aa).

It belongs to the SmpB family.

It localises to the cytoplasm. Functionally, required for rescue of stalled ribosomes mediated by trans-translation. Binds to transfer-messenger RNA (tmRNA), required for stable association of tmRNA with ribosomes. tmRNA and SmpB together mimic tRNA shape, replacing the anticodon stem-loop with SmpB. tmRNA is encoded by the ssrA gene; the 2 termini fold to resemble tRNA(Ala) and it encodes a 'tag peptide', a short internal open reading frame. During trans-translation Ala-aminoacylated tmRNA acts like a tRNA, entering the A-site of stalled ribosomes, displacing the stalled mRNA. The ribosome then switches to translate the ORF on the tmRNA; the nascent peptide is terminated with the 'tag peptide' encoded by the tmRNA and targeted for degradation. The ribosome is freed to recommence translation, which seems to be the essential function of trans-translation. The sequence is that of SsrA-binding protein from Bacillus cereus (strain 03BB102).